A 500-amino-acid chain; its full sequence is Inner membrane transporter YjeM (500 aa).

At 1–10 (MTHTIKKMSL) the chain is on the cytoplasmic side. The helical transmembrane segment at 11–31 (IGLILMIFTSVFGFANSPSAF) threads the bilayer. The Periplasmic portion of the chain corresponds to 32–37 (YLMGYS). A helical membrane pass occupies residues 38 to 58 (AIPWYIFSALLFFIPFALMMA). Topologically, residues 59–83 (EMGSAYRKEEGGIYSWMNNSVGPRY) are cytoplasmic. A helical membrane pass occupies residues 84 to 104 (AFIGTFMWFSSYVIWMVSTAA). The Periplasmic portion of the chain corresponds to 105–124 (KIWVPFSTFVFGADMTQHWR). A helical transmembrane segment spans residues 125–145 (IAGLEPTQVVGLLAVGWMILV). Topologically, residues 146 to 163 (TCVAARGINKIARITAVG) are cytoplasmic. The helical transmembrane segment at 164-184 (GIAVMCLNLVLLLVSVAILLL) threads the bilayer. At 185-209 (NGGHFAQEINFTSSPNPGYHSGLAM) the chain is on the periplasmic side. A helical transmembrane segment spans residues 210–230 (LSFVVFAIFAYGGIEAVGGLV). The Cytoplasmic portion of the chain corresponds to 231–243 (DKTEKPEKNFAKG). The helical transmembrane segment at 244 to 264 (IVFAAIVISIGYSLAIFLWGV) threads the bilayer. The Periplasmic portion of the chain corresponds to 265–308 (STNWQQILSNSAVNLGNITYILMSSLGTTLGNALNLSPEAAMTV). The helical transmembrane segment at 309–329 (GVWFARITGLSMFLAYTGAFF) threads the bilayer. At 330–361 (TLSYSPLKAIIQGTPKALWPAPMTTLNANGMP) the chain is on the cytoplasmic side. The helical transmembrane segment at 362 to 382 (ATAMWLQCVLVSLFILLVSFG) threads the bilayer. Residues 383 to 394 (GDTASAFYNKLT) are Periplasmic-facing. A helical membrane pass occupies residues 395-415 (LMANVSMTLPYLFLALAFPFF). The Cytoplasmic segment spans residues 416 to 433 (KARQDLERPFVLFKTKAS). The chain crosses the membrane as a helical span at residues 434–454 (TLVATGVVVLVVTFANVFTII). Topologically, residues 455–462 (QPVIEAGD) are periplasmic. The helical transmembrane segment at 463–483 (WDSALWMIGGPIFFSLLAMAI) threads the bilayer. Over 484–500 (YQNYSSRMSADPEWAAE) the chain is Cytoplasmic.

It belongs to the amino acid-polyamine-organocation (APC) superfamily.

Its subcellular location is the cell inner membrane. The protein is Inner membrane transporter YjeM (yjeM) of Salmonella typhi.